We begin with the raw amino-acid sequence, 168 residues long: Transcriptional regulator MraZ (168 aa).

SpoVT-AbrB domains are found at residues 8 to 51 and 90 to 140; these read EYNQ…GGDR and ALNM…KADT.

This sequence belongs to the MraZ family. In terms of assembly, forms oligomers.

It localises to the cytoplasm. The protein localises to the nucleoid. The protein is Transcriptional regulator MraZ of Cereibacter sphaeroides (strain ATCC 17025 / ATH 2.4.3) (Rhodobacter sphaeroides).